The chain runs to 47 residues: Delta-ctenitoxin-Pr2d (47 aa).

5 disulfides stabilise this stretch: Cys-3–Cys-17, Cys-10–Cys-23, Cys-14–Cys-46, Cys-16–Cys-31, and Cys-25–Cys-29.

In terms of tissue distribution, expressed by the venom gland.

It is found in the secreted. Functionally, blocks voltage-gated sodium channels (Nav). Causes rapid general spastic paralysis and death when injected in mice at dose levels of less than 2 ug per mouse. The polypeptide is Delta-ctenitoxin-Pr2d (Phoneutria reidyi (Brazilian Amazonian armed spider)).